Consider the following 117-residue polypeptide: MKTIPSEVRCSRLCPACTNAALRLPRNAGRALIWIYRHTLSPLVGFNCRHLPTCSAYGDEAIARFGLWGGGWMTLARILRCRPWGTSGIDNVPVAKPSGATWYRPWRYGRWRGVNAK.

Belongs to the UPF0161 family.

It is found in the cell inner membrane. Its function is as follows. Could be involved in insertion of integral membrane proteins into the membrane. In Nitrobacter winogradskyi (strain ATCC 25391 / DSM 10237 / CIP 104748 / NCIMB 11846 / Nb-255), this protein is Putative membrane protein insertion efficiency factor.